A 247-amino-acid polypeptide reads, in one-letter code: Aspartate/glutamate leucyltransferase (247 aa).

This sequence belongs to the R-transferase family. Bpt subfamily.

It localises to the cytoplasm. The catalysed reaction is N-terminal L-glutamyl-[protein] + L-leucyl-tRNA(Leu) = N-terminal L-leucyl-L-glutamyl-[protein] + tRNA(Leu) + H(+). It carries out the reaction N-terminal L-aspartyl-[protein] + L-leucyl-tRNA(Leu) = N-terminal L-leucyl-L-aspartyl-[protein] + tRNA(Leu) + H(+). Functionally, functions in the N-end rule pathway of protein degradation where it conjugates Leu from its aminoacyl-tRNA to the N-termini of proteins containing an N-terminal aspartate or glutamate. This Dechloromonas aromatica (strain RCB) protein is Aspartate/glutamate leucyltransferase.